Reading from the N-terminus, the 210-residue chain is Transcriptional regulator MxiE (210 aa).

An HTH araC/xylS-type domain is found at 99-199 (YHLVLYLLRT…GFSARELSNI (101 aa)). 2 consecutive DNA-binding regions (H-T-H motif) follow at residues 118–139 (KSLTEHYGVSEAYFRSLCRKAL) and 166–189 (ITSAAMNNGYASTSHFSNEIKTRL).

Functionally, necessary for the secretion of ipa invasins. Probable transcriptional regulatory protein. The protein is Transcriptional regulator MxiE (mxiE) of Shigella flexneri.